Here is a 216-residue protein sequence, read N- to C-terminus: Large ribosomal subunit protein uL24m (216 aa).

A mitochondrion-targeting transit peptide spans 1 to 9 (MRLSALLAL). A Phosphoserine modification is found at Ser24. Residues 56–89 (LFCGDTVEILEGKDAGKQGKVVQVIRQRNWVVVG) enclose the KOW domain.

This sequence belongs to the universal ribosomal protein uL24 family. In terms of assembly, component of the mitochondrial large ribosomal subunit (mt-LSU). Mature mammalian 55S mitochondrial ribosomes consist of a small (28S) and a large (39S) subunit. The 28S small subunit contains a 12S ribosomal RNA (12S mt-rRNA) and 30 different proteins. The 39S large subunit contains a 16S rRNA (16S mt-rRNA), a copy of mitochondrial valine transfer RNA (mt-tRNA(Val)), which plays an integral structural role, and 52 different proteins.

It is found in the mitochondrion. This is Large ribosomal subunit protein uL24m (MRPL24) from Homo sapiens (Human).